We begin with the raw amino-acid sequence, 497 residues long: Cytochrome P450 26A1 (497 aa).

Cys442 serves as a coordination point for heme.

Belongs to the cytochrome P450 family. Heme is required as a cofactor.

It is found in the endoplasmic reticulum membrane. The protein resides in the microsome membrane. It carries out the reaction all-trans-retinoate + reduced [NADPH--hemoprotein reductase] + O2 = all-trans-(4S)-hydroxyretinoate + oxidized [NADPH--hemoprotein reductase] + H2O + H(+). It catalyses the reaction all-trans-(4S)-hydroxyretinoate + reduced [NADPH--hemoprotein reductase] + O2 = all-trans-(4S,16)-dihydroxyretinoate + oxidized [NADPH--hemoprotein reductase] + H2O + H(+). The enzyme catalyses all-trans-retinoate + reduced [NADPH--hemoprotein reductase] + O2 = all-trans-18-hydroxyretinoate + oxidized [NADPH--hemoprotein reductase] + H2O + H(+). Its function is as follows. A cytochrome P450 monooxygenase involved in the metabolism of retinoates (RAs), the active metabolites of vitamin A, and critical signaling molecules in animals. RAs exist as at least four different isomers: all-trans-RA (atRA), 9-cis-RA, 13-cis-RA, and 9,13-dicis-RA, where atRA is considered to be the biologically active isomer, although 9-cis-RA and 13-cis-RA also have activity. Catalyzes the hydroxylation of atRA primarily at C-4 and C-18, thereby contributing to the regulation of atRA homeostasis and signaling. Hydroxylation of atRA limits its biological activity and initiates a degradative process leading to its eventual elimination. Involved in the convertion of atRA to all-trans-4-oxo-RA. Able to metabolize other RAs such as 9-cis, 13-cis and 9,13-di-cis RA. Can oxidize all-trans-13,14-dihydroretinoate (DRA) to metabolites which could include all-trans-4-oxo-DRA, all-trans-4-hydroxy-DRA, all-trans-5,8-epoxy-DRA, and all-trans-18-hydroxy-DRA. May play a role in the oxidative metabolism of xenobiotics such as tazarotenic acid. The sequence is that of Cytochrome P450 26A1 from Mus musculus (Mouse).